Here is a 235-residue protein sequence, read N- to C-terminus: Orotidine 5'-phosphate decarboxylase (235 aa).

Residues D12, K34, 61–70 (DMKLLDIDNT), T116, R177, Q186, and R207 contribute to the substrate site. The Proton donor role is filled by K63.

Belongs to the OMP decarboxylase family. Type 1 subfamily. Homodimer.

The enzyme catalyses orotidine 5'-phosphate + H(+) = UMP + CO2. It participates in pyrimidine metabolism; UMP biosynthesis via de novo pathway; UMP from orotate: step 2/2. Catalyzes the decarboxylation of orotidine 5'-monophosphate (OMP) to uridine 5'-monophosphate (UMP). The polypeptide is Orotidine 5'-phosphate decarboxylase (Rhizobium etli (strain CIAT 652)).